The primary structure comprises 368 residues: Probable dual-specificity RNA methyltransferase RlmN (368 aa).

Residue glutamate 109 is the Proton acceptor of the active site. One can recognise a Radical SAM core domain in the interval 115 to 355 (YPDRVTMCIS…VTIRDTRGQE (241 aa)). A disulfide bond links cysteine 122 and cysteine 360. The [4Fe-4S] cluster site is built by cysteine 129, cysteine 133, and cysteine 136. Residues 184 to 185 (GE), serine 218, 241 to 243 (SLH), and asparagine 317 contribute to the S-adenosyl-L-methionine site. Cysteine 360 functions as the S-methylcysteine intermediate in the catalytic mechanism.

The protein belongs to the radical SAM superfamily. RlmN family. Requires [4Fe-4S] cluster as cofactor.

The protein resides in the cytoplasm. It carries out the reaction adenosine(2503) in 23S rRNA + 2 reduced [2Fe-2S]-[ferredoxin] + 2 S-adenosyl-L-methionine = 2-methyladenosine(2503) in 23S rRNA + 5'-deoxyadenosine + L-methionine + 2 oxidized [2Fe-2S]-[ferredoxin] + S-adenosyl-L-homocysteine. The enzyme catalyses adenosine(37) in tRNA + 2 reduced [2Fe-2S]-[ferredoxin] + 2 S-adenosyl-L-methionine = 2-methyladenosine(37) in tRNA + 5'-deoxyadenosine + L-methionine + 2 oxidized [2Fe-2S]-[ferredoxin] + S-adenosyl-L-homocysteine. Its function is as follows. Specifically methylates position 2 of adenine 2503 in 23S rRNA and position 2 of adenine 37 in tRNAs. The protein is Probable dual-specificity RNA methyltransferase RlmN of Streptomyces coelicolor (strain ATCC BAA-471 / A3(2) / M145).